The chain runs to 133 residues: MQRVTITLDDDLLETLDSLSQRRGYNNRSEAIRDILRSALAQEATQQHGTQGFAVLSYVYEHEKRDLASRIVATQHHHHDLSVATLHVHINHDDCLEIAVLKGDMGDVQHFADDVIAQRGVRHGHLQCLPKED.

4 residues coordinate Ni(2+): His-76, His-87, His-89, and Cys-95.

The protein belongs to the transcriptional regulatory CopG/NikR family. In terms of assembly, homotetramer. Ni(2+) serves as cofactor.

In terms of biological role, transcriptional repressor of the nikABCDE operon. Is active in the presence of excessive concentrations of intracellular nickel. This chain is Nickel-responsive regulator, found in Escherichia coli O6:K15:H31 (strain 536 / UPEC).